The chain runs to 251 residues: Transcription initiation factor TFIID subunit 9B (251 aa).

M1 is modified (N-acetylmethionine). A Phosphoserine modification is found at S147. A phosphothreonine mark is found at T159 and T174. S177 carries the phosphoserine modification. Residues 229 to 251 (QNTANEANPLKRKHEDDDDNDIM) form a disordered region.

The protein belongs to the TAF9 family. As to quaternary structure, binds TAF5 and TAF6. Component of TFIID and the TATA-binding protein-free TAF complex (TFTC). TFIID is composed of TATA binding protein (TBP) and a number of TBP-associated factors (TAFs). Binds N-terminal domain of p53/TP53 which is essential for transcription.

The protein localises to the nucleus. Functionally, essential for cell viability. TAF9 and TAF9B are involved in transcriptional activation as well as repression of distinct but overlapping sets of genes. May have a role in gene regulation associated with apoptosis. TAFs are components of the transcription factor IID (TFIID) complex, the TBP-free TAFII complex (TFTC), the PCAF histone acetylase complex and the STAGA transcription coactivator-HAT complex. TFIID or TFTC are essential for the regulation of RNA polymerase II-mediated transcription. This is Transcription initiation factor TFIID subunit 9B (TAF9B) from Homo sapiens (Human).